We begin with the raw amino-acid sequence, 115 residues long: Autophagy-related protein 8i (115 aa).

G115 carries Phosphatidylethanolamine amidated glycine lipidation.

This sequence belongs to the ATG8 family. In terms of assembly, interacts with ATG4. Interacts with NBR1. Gly-115 forms then a thioester bond with the 'Cys-558' of ATG7 (E1-like activating enzyme) before being transferred to the 'Cys-258' of ATG3 (the specific E2 conjugating enzyme), in order to be finally amidated with phosphatidylethanolamine. This lipid modification anchors ATG8 to autophagosomes. As to expression, constitutively expressed.

The protein localises to the cytoplasmic vesicle. Its subcellular location is the autophagosome membrane. The protein resides in the vacuole membrane. It localises to the cytoplasm. It is found in the cytoskeleton. Its function is as follows. Ubiquitin-like modifier involved in autophagosomes formation. May mediate the delivery of the autophagosomes to the vacuole via the microtubule cytoskeleton. This is Autophagy-related protein 8i (ATG8I) from Arabidopsis thaliana (Mouse-ear cress).